Consider the following 171-residue polypeptide: Terminase, small subunit (171 aa).

It belongs to the P23virus small terminase family. In terms of assembly, homononamer; forms a ring-like structure through which genomic DNA is translocated into the capsid. Heterodimer with the terminase large subunit; the active complex is probably heterooligomeric.

In terms of biological role, the terminase small subunit binds to the packaging initiation site and regulates the ATPase activity of the terminase large subunit. The terminase lies at a unique vertex of the procapsid and is composed of two subunits, a small terminase subunit involved in viral DNA recognition (packaging sequence), and a large terminase subunit. Both terminase subunits heterooligomerize and are docked on the portal protein to form the packaging machine. This is Terminase, small subunit from Thermus virus P23-45 (Thermus thermophilus phage P23-45).